A 335-amino-acid chain; its full sequence is GTPase Obg (335 aa).

The Obg domain maps to 1-159 (MKFVDSAKIS…YELEMELKLM (159 aa)). Positions 160–323 (ADVGLVGFPN…LKDELWRQVS (164 aa)) constitute an OBG-type G domain. Residues 166–173 (GFPNAGKS), 191–195 (FTTLV), 213–216 (DIPG), 280–283 (TKMD), and 304–306 (SSV) each bind GTP. Residues Ser173 and Thr193 each coordinate Mg(2+).

Belongs to the TRAFAC class OBG-HflX-like GTPase superfamily. OBG GTPase family. In terms of assembly, monomer. Mg(2+) is required as a cofactor.

The protein localises to the cytoplasm. An essential GTPase which binds GTP, GDP and possibly (p)ppGpp with moderate affinity, with high nucleotide exchange rates and a fairly low GTP hydrolysis rate. Plays a role in control of the cell cycle, stress response, ribosome biogenesis and in those bacteria that undergo differentiation, in morphogenesis control. The sequence is that of GTPase Obg from Chlorobaculum tepidum (strain ATCC 49652 / DSM 12025 / NBRC 103806 / TLS) (Chlorobium tepidum).